The following is a 95-amino-acid chain: Small ribosomal subunit protein uS19 (95 aa).

Belongs to the universal ribosomal protein uS19 family.

Its function is as follows. Protein S19 forms a complex with S13 that binds strongly to the 16S ribosomal RNA. This chain is Small ribosomal subunit protein uS19, found in Thermosipho melanesiensis (strain DSM 12029 / CIP 104789 / BI429).